The chain runs to 485 residues: Glutamyl-tRNA(Gln) amidotransferase subunit A (485 aa).

Catalysis depends on charge relay system residues lysine 78 and serine 153. Serine 177 serves as the catalytic Acyl-ester intermediate.

This sequence belongs to the amidase family. GatA subfamily. As to quaternary structure, heterotrimer of A, B and C subunits.

It carries out the reaction L-glutamyl-tRNA(Gln) + L-glutamine + ATP + H2O = L-glutaminyl-tRNA(Gln) + L-glutamate + ADP + phosphate + H(+). Functionally, allows the formation of correctly charged Gln-tRNA(Gln) through the transamidation of misacylated Glu-tRNA(Gln) in organisms which lack glutaminyl-tRNA synthetase. The reaction takes place in the presence of glutamine and ATP through an activated gamma-phospho-Glu-tRNA(Gln). This chain is Glutamyl-tRNA(Gln) amidotransferase subunit A, found in Geobacter sulfurreducens (strain ATCC 51573 / DSM 12127 / PCA).